We begin with the raw amino-acid sequence, 698 residues long: Polyphosphate kinase (698 aa).

N63 is a binding site for ATP. 2 residues coordinate Mg(2+): R390 and R420. Catalysis depends on H450, which acts as the Phosphohistidine intermediate. Y483, R579, and H607 together coordinate ATP.

Belongs to the polyphosphate kinase 1 (PPK1) family. Requires Mg(2+) as cofactor. An intermediate of this reaction is the autophosphorylated ppk in which a phosphate is covalently linked to a histidine residue through a N-P bond.

The enzyme catalyses [phosphate](n) + ATP = [phosphate](n+1) + ADP. In terms of biological role, catalyzes the reversible transfer of the terminal phosphate of ATP to form a long-chain polyphosphate (polyP). The chain is Polyphosphate kinase from Xylella fastidiosa (strain 9a5c).